Reading from the N-terminus, the 301-residue chain is tRNA pseudouridine synthase B (301 aa).

Asp45 (nucleophile) is an active-site residue.

Belongs to the pseudouridine synthase TruB family. Type 1 subfamily.

The enzyme catalyses uridine(55) in tRNA = pseudouridine(55) in tRNA. Responsible for synthesis of pseudouridine from uracil-55 in the psi GC loop of transfer RNAs. This Streptomyces avermitilis (strain ATCC 31267 / DSM 46492 / JCM 5070 / NBRC 14893 / NCIMB 12804 / NRRL 8165 / MA-4680) protein is tRNA pseudouridine synthase B.